The chain runs to 218 residues: dTTP/UTP pyrophosphatase (218 aa).

Over residues 1–10 (MTASPSSAEG) the composition is skewed to polar residues. Positions 1–20 (MTASPSSAEGSSGLPDRPKL) are disordered. Asp87 functions as the Proton acceptor in the catalytic mechanism.

This sequence belongs to the Maf family. YhdE subfamily. Requires a divalent metal cation as cofactor.

The protein localises to the cytoplasm. The enzyme catalyses dTTP + H2O = dTMP + diphosphate + H(+). The catalysed reaction is UTP + H2O = UMP + diphosphate + H(+). Its function is as follows. Nucleoside triphosphate pyrophosphatase that hydrolyzes dTTP and UTP. May have a dual role in cell division arrest and in preventing the incorporation of modified nucleotides into cellular nucleic acids. The protein is dTTP/UTP pyrophosphatase of Gluconobacter oxydans (strain 621H) (Gluconobacter suboxydans).